A 524-amino-acid polypeptide reads, in one-letter code: MLKDIHQHRILILDFSSQYAQLIARRVREIGVYCELMPCDIDEETIRDFNPHGIILSGGPETVTLSHTLRAPAFIFEIGCPVLGICYGMQTMAYQLGGKVNRTAKAEFGHAQLRVLNPAFLFDGIEDQVSPQGEPLLDVWMSHGDIVSELPPGFEATACTDNSPLAAMADFKRRFFGLQFHPEVTHTPQGHRILAHFVIHICQCIPNWTTKHIIEDSIRDIQEKVGKEQVIVGLSGGVDSAVTATLVHKAIGDQLVCVLVDTGLLRLNEVDEVLNVFQKHLGAKVICVDAKDRFMKALKGISDPEEKRKIAGEQFIRVFEEQAKKLNVKWLGQGTIYPDVIESAKTKTGKGHIIKTHHNVGGLPLNMELKLIEPLRELFKDEVRKLGLELGLPADLIYRHPFPGPGLAIRILGEVNAEYINILKQADAIFIEELKKSDYYHQVSQAFAVFMPLKSVGVKGDARHYGYIIALRAVKTVDFMTAQWADLPHEFLSKVSHRIVNEIKEVSRVVYDMTNKPPATIEWE.

In terms of domain architecture, Glutamine amidotransferase type-1 spans 9-207 (RILILDFSSQ…VIHICQCIPN (199 aa)). Cysteine 86 (nucleophile) is an active-site residue. Residues histidine 181 and glutamate 183 contribute to the active site. The GMPS ATP-PPase domain occupies 208–399 (WTTKHIIEDS…LGLPADLIYR (192 aa)). ATP is bound at residue 235-241 (SGGVDSA).

Homodimer.

It catalyses the reaction XMP + L-glutamine + ATP + H2O = GMP + L-glutamate + AMP + diphosphate + 2 H(+). The protein operates within purine metabolism; GMP biosynthesis; GMP from XMP (L-Gln route): step 1/1. Functionally, catalyzes the synthesis of GMP from XMP. This chain is GMP synthase [glutamine-hydrolyzing], found in Coxiella burnetii (strain Dugway 5J108-111).